The following is a 329-amino-acid chain: MRRLPLLEVSQLKMHFDAGKKRTVKAVDGVTFQIREGETFGLVGESGCGKSTLGRVLMRLYQPTEGSVTYRGTNLHALSEKEQFAFNRKLQMIFQDPYASLNPRMTVREIILEPMEIHNLYNTHKARLLVVDELLEAVGLHPDFGSRYPHEFSGGQRQRIGIARALSLNPEFIVADEPISALDVSVQAQVVNLLKRLQKEKGLTFLFIAHDLSMVKHISDRIGVMYLGHMMEITESGTLYREPLHPYTKALLSSIPIPDPELEDKRERILLKGELPSPVNPPSGCVFRTRCPEAMPECGESRPQLQEIEPGRFVACHLYRNAETKEKVR.

The ABC transporter domain maps to 7–252; the sequence is LEVSQLKMHF…PLHPYTKALL (246 aa). ATP is bound at residue 44 to 51; sequence GESGCGKS.

It belongs to the ABC transporter superfamily.

The chain is Putative oligopeptide transport ATP-binding protein YkfD (ykfD) from Bacillus subtilis (strain 168).